We begin with the raw amino-acid sequence, 1252 residues long: LRR receptor-like serine/threonine-protein kinase GSO2 (1252 aa).

The signal sequence occupies residues 1 to 22 (MQQNSVLLALFFLCFSSGLGSG). Over 23-876 (QPGQRDDLQT…QRSLSPKTVV (854 aa)) the chain is Extracellular. N-linked (GlcNAc...) asparagine glycosylation is found at asparagine 62, asparagine 77, and asparagine 117. LRR repeat units lie at residues 94–118 (FNNLIHIDLSSNRLVGPIPTTLSNL), 120–143 (SSLESLHLFSNLLSGDIPSQLGSL), 144–166 (VNLKSLKLGDNELNGTIPETFGN), 168–190 (VNLQMLALASCRLTGLIPSRFGR), 191–215 (LVQLQTLILQDNELEGPIPAEIGNC), 217–239 (SLALFAAAFNRLNGSLPAELNRL), 240–263 (KNLQTLNLGDNSFSGEIPSQLGDL), 265–286 (SIQYLNLIGNQLQGLIPKRLTE), 287–310 (LANLQTLDLSSNNLTGVIHEEFWR), and 312–335 (NQLEFLVLAKNRLSGSLPKTICSN). An N-linked (GlcNAc...) asparagine glycan is attached at asparagine 157. 2 N-linked (GlcNAc...) asparagine glycosylation sites follow: asparagine 214 and asparagine 229. Asparagine 299 carries N-linked (GlcNAc...) asparagine glycosylation. The N-linked (GlcNAc...) asparagine glycan is linked to asparagine 336. 21 LRR repeats span residues 337–360 (TSLKQLFLSETQLSGEIPAEISNC), 361–384 (QSLKLLDLSNNTLTGQIPDSLFQL), 386–408 (ELTNLYLNNNSLEGTLSSSISNL), 409–433 (TNLQEFTLYHNNLEGKVPKEIGFLG), 435–456 (LEIMYLYENRFSGEMPVEIGNC), 457–480 (TRLQEIDWYGNRLSGEIPSSIGRL), 481–504 (KDLTRLHLRENELVGNIPASLGNC), 506–528 (QMTVIDLADNQLSGSIPSSFGFL), 529–552 (TALELFMIYNNSLQGNLPDSLINL), 554–575 (NLTRINFSSNKFNGSISPLCGS), 577–599 (SYLSFDVTENGFEGDIPLELGKS), 600–622 (TNLDRLRLGKNQFTGRIPRTFGK), 623–648 (ISELSLLDISRNSLSGIIPVELGLCK), 650–670 (LTHIDLNNNYLSGVIPTWLGK), 671–695 (LPLLGELKLSSNKFVGSLPTEIFSL), 697–719 (NILTLFLDGNSLNGSIPQEIGNL), 720–743 (QALNALNLEENQLSGPLPSTIGKL), 745–767 (KLFELRLSRNALTGEIPVEIGQL), 768–792 (QDLQSALDLSYNNFTGRIPSTISTL), 793–816 (PKLESLDLSHNQLVGEVPGQIGDM), and 818–839 (SLGYLNLSYNNLEGKLKKQFSR). Residues asparagine 370, asparagine 394, and asparagine 407 are each glycosylated (N-linked (GlcNAc...) asparagine). N-linked (GlcNAc...) asparagine glycosylation is present at asparagine 455. N-linked (GlcNAc...) asparagine glycans are attached at residues asparagine 538, asparagine 554, asparagine 559, and asparagine 566. Asparagine 709 is a glycosylation site (N-linked (GlcNAc...) asparagine). The N-linked (GlcNAc...) asparagine glycan is linked to asparagine 780. Asparagine 823 carries N-linked (GlcNAc...) asparagine glycosylation. The chain crosses the membrane as a helical span at residues 877 to 897 (IISAISSLAAIALMVLVIILF). Topologically, residues 898-1252 (FKQNHDLFKK…YREMQTDTDK (355 aa)) are cytoplasmic. Phosphothreonine is present on threonine 945. A Protein kinase domain is found at 948 to 1232 (LNEEFMIGSG…PSSRQASEYL (285 aa)). ATP-binding positions include 954-962 (IGSGGSGKV) and lysine 976. A phosphotyrosine mark is found at tyrosine 1024 and tyrosine 1066. Aspartate 1079 acts as the Proton acceptor in catalysis. At serine 1114 the chain carries Phosphoserine. Residues tyrosine 1124 and tyrosine 1131 each carry the phosphotyrosine modification.

The protein belongs to the protein kinase superfamily. Ser/Thr protein kinase family. As to quaternary structure, interacts with CIF1 and CIF2. In terms of tissue distribution, mostly expressed in siliques, seeds, developing embryos and seedlings, detected in flower buds, but not in roots, leaves or stems.

Its subcellular location is the cell membrane. The enzyme catalyses L-seryl-[protein] + ATP = O-phospho-L-seryl-[protein] + ADP + H(+). It catalyses the reaction L-threonyl-[protein] + ATP = O-phospho-L-threonyl-[protein] + ADP + H(+). In terms of biological role, together with GSO1, receptor-like serine/threonine-kinase required during the development of the epidermal surface in embryos and cotyledons. Involved in the nuclear division phase of megagametogenesis. In coordination with GSO2, regulates root growth through control of cell division and cell fate specification. Controls seedling root growth by modulating sucrose response after germination. Receptor of the peptide hormones CIF1 and CIF2 required for contiguous Casparian strip diffusion barrier formation in roots. This is LRR receptor-like serine/threonine-protein kinase GSO2 from Arabidopsis thaliana (Mouse-ear cress).